Reading from the N-terminus, the 474-residue chain is Aspartyl/glutamyl-tRNA(Asn/Gln) amidotransferase subunit B (474 aa).

It belongs to the GatB/GatE family. GatB subfamily. Heterotrimer of A, B and C subunits.

The catalysed reaction is L-glutamyl-tRNA(Gln) + L-glutamine + ATP + H2O = L-glutaminyl-tRNA(Gln) + L-glutamate + ADP + phosphate + H(+). It carries out the reaction L-aspartyl-tRNA(Asn) + L-glutamine + ATP + H2O = L-asparaginyl-tRNA(Asn) + L-glutamate + ADP + phosphate + 2 H(+). Functionally, allows the formation of correctly charged Asn-tRNA(Asn) or Gln-tRNA(Gln) through the transamidation of misacylated Asp-tRNA(Asn) or Glu-tRNA(Gln) in organisms which lack either or both of asparaginyl-tRNA or glutaminyl-tRNA synthetases. The reaction takes place in the presence of glutamine and ATP through an activated phospho-Asp-tRNA(Asn) or phospho-Glu-tRNA(Gln). This chain is Aspartyl/glutamyl-tRNA(Asn/Gln) amidotransferase subunit B, found in Wolbachia pipientis wMel.